Reading from the N-terminus, the 471-residue chain is Glutamate--tRNA ligase (471 aa).

The 'HIGH' region signature appears at 9–19 (PSPTGYLHVGG). Residues cysteine 98, cysteine 100, cysteine 125, and histidine 127 each contribute to the Zn(2+) site. Residues 237–241 (KLSKR) carry the 'KMSKS' region motif. Lysine 240 contacts ATP.

Belongs to the class-I aminoacyl-tRNA synthetase family. Glutamate--tRNA ligase type 1 subfamily. In terms of assembly, monomer. It depends on Zn(2+) as a cofactor.

It localises to the cytoplasm. The catalysed reaction is tRNA(Glu) + L-glutamate + ATP = L-glutamyl-tRNA(Glu) + AMP + diphosphate. Catalyzes the attachment of glutamate to tRNA(Glu) in a two-step reaction: glutamate is first activated by ATP to form Glu-AMP and then transferred to the acceptor end of tRNA(Glu). The polypeptide is Glutamate--tRNA ligase (Enterobacter sp. (strain 638)).